The sequence spans 418 residues: UDP-N-acetylglucosamine 1-carboxyvinyltransferase (418 aa).

22–23 lines the phosphoenolpyruvate pocket; sequence KN. Residue Arg-92 participates in UDP-N-acetyl-alpha-D-glucosamine binding. Cys-116 (proton donor) is an active-site residue. Cys-116 is modified (2-(S-cysteinyl)pyruvic acid O-phosphothioketal). UDP-N-acetyl-alpha-D-glucosamine-binding positions include 121–125, Asp-305, and Leu-327; that span reads RPIDL.

The protein belongs to the EPSP synthase family. MurA subfamily.

It is found in the cytoplasm. The catalysed reaction is phosphoenolpyruvate + UDP-N-acetyl-alpha-D-glucosamine = UDP-N-acetyl-3-O-(1-carboxyvinyl)-alpha-D-glucosamine + phosphate. The protein operates within cell wall biogenesis; peptidoglycan biosynthesis. Functionally, cell wall formation. Adds enolpyruvyl to UDP-N-acetylglucosamine. The polypeptide is UDP-N-acetylglucosamine 1-carboxyvinyltransferase (Campylobacter jejuni subsp. jejuni serotype O:6 (strain 81116 / NCTC 11828)).